The following is a 1456-amino-acid chain: Macrophage mannose receptor 1 (1456 aa).

The N-terminal stretch at 1–19 (MRLLLLLAFISVIPVSVQL) is a signal peptide. The Extracellular segment spans residues 20-1388 (LDARQFLIYN…DPQPKGSSKA (1369 aa)). The Ricin B-type lectin domain maps to 22-142 (ARQFLIYNED…SGLWSRWKVY (121 aa)). 7 cysteine pairs are disulfide-bonded: Cys-35–Cys-49, Cys-74–Cys-91, Cys-102–Cys-149, Cys-168–Cys-194, Cys-182–Cys-209, Cys-247–Cys-340, and Cys-316–Cys-332. A glycan (N-linked (GlcNAc...) asparagine) is linked at Asn-104. In terms of domain architecture, Fibronectin type-II spans 163-211 (ANGAVCAFPFKFENKWYADCTSAGRSDGWLWCGTTTDYDKDKLFGFCPL). The region spanning 225-341 (LTGILYQINS…CVQKLGYICK (117 aa)) is the C-type lectin 1 domain. A glycan (N-linked (GlcNAc...) asparagine) is linked at Asn-344. C-type lectin domains follow at residues 369–487 (YAGH…YICK), 511–626 (HGFY…FVCK), 655–778 (KTSM…WICQ), and 807–923 (YKDY…FICQ). Disulfide bonds link Cys-391/Cys-486 and Cys-463/Cys-478. The N-linked (GlcNAc...) asparagine glycan is linked to Asn-529. Intrachain disulfides connect Cys-532-Cys-625, Cys-600-Cys-617, Cys-680-Cys-777, Cys-753-Cys-769, Cys-828-Cys-922, and Cys-899-Cys-914. 2 N-linked (GlcNAc...) asparagine glycosylation sites follow: Asn-926 and Asn-930. C-type lectin domains follow at residues 951–1079 (YKNK…YICQ), 1101–1212 (YGKS…FLCK), and 1240–1355 (FYGH…FICK). Disulfide bonds link Cys-976-Cys-1078, Cys-1051-Cys-1070, Cys-1122-Cys-1211, Cys-1189-Cys-1203, Cys-1262-Cys-1354, and Cys-1331-Cys-1346. N-linked (GlcNAc...) asparagine glycosylation occurs at Asn-1159. The N-linked (GlcNAc...) asparagine glycan is linked to Asn-1204. A helical transmembrane segment spans residues 1389-1409 (AGVVTVVLLIVIGAGVAAYFF). The Cytoplasmic segment spans residues 1410-1456 (YKKRHALHIPQEATFENTLYFNSNLSPGTSDTKDLMGNIEQNEHAII).

In terms of tissue distribution, detected in macrophages.

It is found in the endosome membrane. The protein localises to the cell membrane. Functionally, mediates the endocytosis of glycoproteins by macrophages. Binds both sulfated and non-sulfated polysaccharide chains. Acts as phagocytic receptor for bacteria, fungi and other pathogens. This chain is Macrophage mannose receptor 1 (Mrc1), found in Mus musculus (Mouse).